The chain runs to 133 residues: Small ribosomal subunit protein uS8 (133 aa).

Belongs to the universal ribosomal protein uS8 family. As to quaternary structure, part of the 30S ribosomal subunit. Contacts proteins S5 and S12.

Its function is as follows. One of the primary rRNA binding proteins, it binds directly to 16S rRNA central domain where it helps coordinate assembly of the platform of the 30S subunit. In Chlamydia trachomatis serovar L2b (strain UCH-1/proctitis), this protein is Small ribosomal subunit protein uS8.